A 704-amino-acid polypeptide reads, in one-letter code: Polyribonucleotide nucleotidyltransferase (704 aa).

Positions 488 and 494 each coordinate Mg(2+). In terms of domain architecture, KH spans 555–614 (PRITTIKINPEKIRDVIGKGGATIRALTEETGTTIELDDDGTVKIASSNGEATKEAIRRI). The 69-residue stretch at 624-692 (GTVYNGKVVR…RQGRVRLSMK (69 aa)) folds into the S1 motif domain.

This sequence belongs to the polyribonucleotide nucleotidyltransferase family. In terms of assembly, component of the RNA degradosome, which is a multiprotein complex involved in RNA processing and mRNA degradation. It depends on Mg(2+) as a cofactor.

It localises to the cytoplasm. It catalyses the reaction RNA(n+1) + phosphate = RNA(n) + a ribonucleoside 5'-diphosphate. Its function is as follows. Involved in mRNA degradation. Catalyzes the phosphorolysis of single-stranded polyribonucleotides processively in the 3'- to 5'-direction. The polypeptide is Polyribonucleotide nucleotidyltransferase (Shewanella pealeana (strain ATCC 700345 / ANG-SQ1)).